The chain runs to 641 residues: Calpain-6 (641 aa).

The Calpain catalytic domain occupies 26-343; that stretch reads LFCDPTFLPE…FHKLNVCRNV (318 aa). The tract at residues 344–495 is domain III; that stretch reads NNPVFGRKEL…IFSEVPVQLR (152 aa). The region spanning 498-621 is the C2 domain; it reads TLDMPKMSCW…YLRKKGGPTA (124 aa).

This sequence belongs to the peptidase C2 family. Interacts (via domain III) with microtubules. Interacts (via domain II) with ARHGEF2 (via the N-terminal zinc finger).

The protein resides in the cytoplasm. It localises to the perinuclear region. The protein localises to the cytoskeleton. Its subcellular location is the spindle. Functionally, microtubule-stabilizing protein that may be involved in the regulation of microtubule dynamics and cytoskeletal organization. May act as a regulator of RAC1 activity through interaction with ARHGEF2 to control lamellipodial formation and cell mobility. Does not seem to have protease activity as it has lost the active site residues. In Rattus norvegicus (Rat), this protein is Calpain-6 (Capn6).